Reading from the N-terminus, the 388-residue chain is 3-sulfinopropanoyl-CoA desulfinase (388 aa).

FAD contacts are provided by residues 121-124, serine 130, and 153-156; these read ICIT and HWIT. 240-241 contributes to the substrate binding site; it reads YN. FAD is bound by residues arginine 269, glutamine 336, 363–367, and glutamine 384; that span reads GGTAQ.

The protein belongs to the acyl-CoA dehydrogenase family. As to quaternary structure, homotrimer or homotetramer. Requires FAD as cofactor.

The catalysed reaction is 3-sulfinopropanoyl-CoA + H2O = propanoyl-CoA + sulfite + H(+). Functionally, catalyzes the conversion 3-sulfinopropanoyl-CoA (3SP-CoA) to propanoyl-CoA by abstraction of sulfite. Does not show dehydrogenase activity. The polypeptide is 3-sulfinopropanoyl-CoA desulfinase (Paraburkholderia xenovorans (strain LB400)).